A 314-amino-acid polypeptide reads, in one-letter code: tRNA pseudouridine synthase B (314 aa).

Histidine 43 is a binding site for substrate. The active-site Nucleophile is the aspartate 48. Residues tyrosine 76, tyrosine 179, and leucine 200 each contribute to the substrate site.

This sequence belongs to the pseudouridine synthase TruB family. Type 1 subfamily.

It catalyses the reaction uridine(55) in tRNA = pseudouridine(55) in tRNA. Responsible for synthesis of pseudouridine from uracil-55 in the psi GC loop of transfer RNAs. In Enterobacter sp. (strain 638), this protein is tRNA pseudouridine synthase B.